The following is a 207-amino-acid chain: Ubiquitin-conjugating enzyme E2 E3 (207 aa).

Residues 1–10 (MSSDRQRSDD) are compositionally biased toward basic and acidic residues. The interval 1-63 (MSSDRQRSDD…KTTAKLSTSA (63 aa)) is disordered. Residue Ser2 is modified to N-acetylserine. The residue at position 8 (Ser8) is a Phosphoserine. Residues 50–63 (KLSSKTTAKLSTSA) are compositionally biased toward low complexity. Positions 61–207 (TSAKRIQKEL…ARQWTKRYAT (147 aa)) constitute a UBC core domain. Cys145 functions as the Glycyl thioester intermediate in the catalytic mechanism.

This sequence belongs to the ubiquitin-conjugating enzyme family. In terms of assembly, the ubiquitin-loaded form interacts specifically with importin-11 (IPO11), leading to its import into the nucleus. Interacts with NEDD4L.

The protein resides in the nucleus. It localises to the cytoplasm. The catalysed reaction is S-ubiquitinyl-[E1 ubiquitin-activating enzyme]-L-cysteine + [E2 ubiquitin-conjugating enzyme]-L-cysteine = [E1 ubiquitin-activating enzyme]-L-cysteine + S-ubiquitinyl-[E2 ubiquitin-conjugating enzyme]-L-cysteine.. It participates in protein modification; protein ubiquitination. Its function is as follows. Accepts ubiquitin from the E1 complex and catalyzes its covalent attachment to other proteins. In vitro catalyzes 'Lys-11'- and 'Lys-48'-, as well as 'Lys-63'-linked polyubiquitination. Participates in the regulation of transepithelial sodium transport in renal cells. This is Ubiquitin-conjugating enzyme E2 E3 (UBE2E3) from Bos taurus (Bovine).